The following is a 36-amino-acid chain: Photosystem I reaction center subunit VIII (36 aa).

A helical membrane pass occupies residues 8–28 (SLFVPLVGLVFPAIAMASLFL).

Belongs to the PsaI family.

The protein resides in the plastid. It is found in the chloroplast thylakoid membrane. Functionally, may help in the organization of the PsaL subunit. This is Photosystem I reaction center subunit VIII from Brassica oleracea (Wild cabbage).